We begin with the raw amino-acid sequence, 309 residues long: Mitochondrial import receptor subunit TOM34 (309 aa).

A Phosphoserine modification is found at S8. TPR repeat units follow at residues 9–42 (VEQL…LQAR), 51–84 (SVLY…VPFS), and 85–118 (IKPL…DNSV). Residues 158–189 (WNSLPSDNHKETAKTKSKEATATKSRVPSAGD) form a disordered region. The residue at position 160 (S160) is a Phosphoserine. A compositionally biased stretch (basic and acidic residues) spans 164–178 (DNHKETAKTKSKEAT). S186 is modified (phosphoserine). TPR repeat units lie at residues 193 to 226 (AKAL…SSLE), 227 to 260 (SATY…DGKN), and 261 to 294 (VKAF…EPRN). A Glycyl lysine isopeptide (Lys-Gly) (interchain with G-Cter in SUMO2) cross-link involves residue K197.

The protein belongs to the Tom34 family. As to quaternary structure, interacts with HSP90A, VCP, ATP6V1D, KIAA0665, AMPK, and DMAP1 through its TPR repeat. In terms of tissue distribution, isoform 1 is ubiquitously expressed while isoform 2 is expressed only in mature testicular germ cells. Isoform 1 is expressed in all testicular cells. Isoform 2 is highly expressed in early to late pachytene cells but expression is significantly decreased in round spermatid cells.

It localises to the cytoplasm. Its subcellular location is the mitochondrion outer membrane. Functionally, plays a role in the import of cytosolically synthesized preproteins into mitochondria. Binds the mature portion of precursor proteins. Interacts with cellular components, and possesses weak ATPase activity. May be a chaperone-like protein that helps to keep newly synthesized precursors in an unfolded import compatible state. This Mus musculus (Mouse) protein is Mitochondrial import receptor subunit TOM34 (Tomm34).